Reading from the N-terminus, the 469-residue chain is 3-isopropylmalate dehydratase large subunit (469 aa).

C349, C410, and C413 together coordinate [4Fe-4S] cluster.

This sequence belongs to the aconitase/IPM isomerase family. LeuC type 1 subfamily. In terms of assembly, heterodimer of LeuC and LeuD. [4Fe-4S] cluster is required as a cofactor.

The catalysed reaction is (2R,3S)-3-isopropylmalate = (2S)-2-isopropylmalate. It functions in the pathway amino-acid biosynthesis; L-leucine biosynthesis; L-leucine from 3-methyl-2-oxobutanoate: step 2/4. Its function is as follows. Catalyzes the isomerization between 2-isopropylmalate and 3-isopropylmalate, via the formation of 2-isopropylmaleate. The polypeptide is 3-isopropylmalate dehydratase large subunit (Neisseria meningitidis serogroup B (strain ATCC BAA-335 / MC58)).